The sequence spans 131 residues: Tegument protein ORF52 (131 aa).

Positions S103–D131 are disordered. The span at A122 to D131 shows a compositional bias: low complexity. Residue S123 is modified to Phosphoserine; by host.

Belongs to the herpesviridae BLRF2 family. Homooligomer; homooligomerizes and binds double-stranded DNA (dsDNA) cooperatively. Interacts with host CGAS. Interacts with PQBP1.

The protein localises to the host cytoplasm. It is found in the virion tegument. Its function is as follows. Plays a role in the inhibition of host innate immune system by targeting the CGAS enzymatic activity which is the principal cytosolic DNA sensor that detects invading viral DNA. Acts by inhibiting CGAS-DNA phase separation: directly binds double-stranded DNA (dsDNA) in a length dependent but sequence independent manner and is able to form DNA-induced phase separation in infected cells. DNA phase separation of ORF52 mediates disruption of liquid-like droplets in which CGAS is activated, thereby preventing CGAS activity. Targets also the HDP-RNP complex composed of DNA-PK subunits and paraspeckle proteins. This complex is a key nuclear regulator of DNA-mediated activation of innate immune response through the cGAS-STING pathway. The chain is Tegument protein ORF52 from Homo sapiens (Human).